Here is a 189-residue protein sequence, read N- to C-terminus: Development-specific protein LVN1.2 (189 aa).

As to expression, endoderm cells.

The chain is Development-specific protein LVN1.2 from Lytechinus variegatus (Green sea urchin).